The following is a 134-amino-acid chain: Profilin-3 (134 aa).

Cys-13 and Cys-118 are disulfide-bonded. An Involved in PIP2 interaction motif is present at residues 84–100 (AVIRGKKGSGGITIKKT). Thr-114 carries the post-translational modification Phosphothreonine.

This sequence belongs to the profilin family. In terms of assembly, occurs in many kinds of cells as a complex with monomeric actin in a 1:1 ratio. Phosphorylated by MAP kinases.

It is found in the cytoplasm. The protein localises to the cytoskeleton. Its function is as follows. Binds to actin and affects the structure of the cytoskeleton. At high concentrations, profilin prevents the polymerization of actin, whereas it enhances it at low concentrations. The sequence is that of Profilin-3 from Olea europaea (Common olive).